The following is a 176-amino-acid chain: Ubiquitin-conjugating enzyme E2-20 kDa (176 aa).

Polar residues predominate over residues 1–20; that stretch reads MDSDMQNQNPHTNSKNSSSA. Residues 1–25 form a disordered region; that stretch reads MDSDMQNQNPHTNSKNSSSAGMAVD. Residues 28-175 enclose the UBC core domain; the sequence is SVTKRLRSEL…LMQRYKEIDE (148 aa). Cysteine 113 (glycyl thioester intermediate) is an active-site residue.

The protein belongs to the ubiquitin-conjugating enzyme family.

The catalysed reaction is S-ubiquitinyl-[E1 ubiquitin-activating enzyme]-L-cysteine + [E2 ubiquitin-conjugating enzyme]-L-cysteine = [E1 ubiquitin-activating enzyme]-L-cysteine + S-ubiquitinyl-[E2 ubiquitin-conjugating enzyme]-L-cysteine.. It participates in protein modification; protein ubiquitination. Its function is as follows. Catalyzes the covalent attachment of ubiquitin to other proteins. This is Ubiquitin-conjugating enzyme E2-20 kDa (ubc11) from Schizosaccharomyces pombe (strain 972 / ATCC 24843) (Fission yeast).